Here is a 2833-residue protein sequence, read N- to C-terminus: Reticulocyte-binding protein 1 (2833 aa).

The N-terminal stretch at Met1–Gly22 is a signal peptide. Residues Glu75–His91 are compositionally biased toward basic and acidic residues. 3 disordered regions span residues Glu75 to Phe95, His112 to Glu133, and Lys819 to Arg860. The span at Lys819–Ser836 shows a compositional bias: basic and acidic residues. Over residues Val837–Gln849 the composition is skewed to acidic residues. The short motif at Arg2563 to Asp2565 is the Cell attachment site element. The tract at residues Glu2619–Ser2755 is disordered. Composition is skewed to basic and acidic residues over residues Asn2621 to Ala2633 and Glu2640 to Val2652. The segment covering Met2655–Glu2670 has biased composition (polar residues). Acidic residues predominate over residues Leu2706 to Met2720. The span at Thr2731–Asn2742 shows a compositional bias: basic and acidic residues. The segment covering Thr2743–Ser2755 has biased composition (polar residues).

Homodimer.

Its subcellular location is the membrane. In terms of biological role, involved in reticulocyte adhesion. Specifically binds to human reticulocyte cells. In Plasmodium vivax (strain Belem), this protein is Reticulocyte-binding protein 1 (RBP1).